Here is a 266-residue protein sequence, read N- to C-terminus: Chymotrypsin-like elastase family member 1 (266 aa).

The first 16 residues, 1 to 16 (MLRFLVFASLVLYGHS), serve as a signal peptide directing secretion. A propeptide spans 17–26 (TQDFPETNAR) (activation peptide). The Peptidase S1 domain occupies 27 to 264 (VVGGAEARRN…YISWMNNVIA (238 aa)). Cys56 and Cys72 are joined by a disulfide. His71 serves as the catalytic Charge relay system. Ca(2+) is bound by residues Asp85, Asn87, Gln90, and Glu95. The active-site Charge relay system is Asp119. Disulfide bonds link Cys153–Cys220, Cys184–Cys200, and Cys210–Cys240. Residue Ser214 is the Charge relay system of the active site.

This sequence belongs to the peptidase S1 family. Elastase subfamily. It depends on Ca(2+) as a cofactor. Pancreas.

The protein localises to the secreted. It catalyses the reaction Hydrolysis of proteins, including elastin. Preferential cleavage: Ala-|-Xaa.. In terms of biological role, serine proteases that hydrolyze many proteins in addition to elastin. The protein is Chymotrypsin-like elastase family member 1 (Cela1) of Rattus norvegicus (Rat).